A 447-amino-acid polypeptide reads, in one-letter code: MFDYHQPDPTGHFGIYGGSFVSETLTHAINELKDAYAKYQNDPEFLAEFHSELAHFVGRPSPIYHAARMSREQGGAQIYLKREDLNHTGAHKINNTIGQAMLARRMGKTRIIAETGAGQHGVATATICARYGLECVVYMGSEDVKRQSPNVYRMKLLGATVVPVESGSKTLKDALNEAMRDWVANVDNTFYIIGTVAGPHPYPMMVRDFQSVIGTECLAQMPEFIGNRQPDAVIACVGGGSNAMGIFYPYIAHEETRLIGVEAAGEGLESGKHSASLQRGLPGVLHGNRTYVLQNDDGQVTETHSISAGLDYPGVGPEHAFLKDIGRAEYVGITDTEALEAFHYLCRTEGIIAALESSHAVAYAMKLAKTMRSDQSILVNLSGRGDKDIGTVADLSGADFYDRPSMRGLAVKGGEQPKEFSDGPPLGKLAPSGGSAVREATSVGARK.

Residue Lys92 is modified to N6-(pyridoxal phosphate)lysine. Residues Gly408 to Lys447 are disordered.

Belongs to the TrpB family. Tetramer of two alpha and two beta chains. Pyridoxal 5'-phosphate serves as cofactor.

It catalyses the reaction (1S,2R)-1-C-(indol-3-yl)glycerol 3-phosphate + L-serine = D-glyceraldehyde 3-phosphate + L-tryptophan + H2O. Its pathway is amino-acid biosynthesis; L-tryptophan biosynthesis; L-tryptophan from chorismate: step 5/5. Functionally, the beta subunit is responsible for the synthesis of L-tryptophan from indole and L-serine. In Polaromonas sp. (strain JS666 / ATCC BAA-500), this protein is Tryptophan synthase beta chain.